The primary structure comprises 130 residues: L-ectoine synthase (130 aa).

The protein belongs to the ectoine synthase family.

It catalyses the reaction (2S)-4-acetamido-2-aminobutanoate = L-ectoine + H2O. It functions in the pathway amine and polyamine biosynthesis; ectoine biosynthesis; L-ectoine from L-aspartate 4-semialdehyde: step 3/3. Functionally, catalyzes the circularization of gamma-N-acetyl-alpha,gamma-diaminobutyric acid (ADABA) to ectoine (1,4,5,6-tetrahydro-2-methyl-4-pyrimidine carboxylic acid), which is an excellent osmoprotectant. The protein is L-ectoine synthase of Mycobacteroides abscessus (strain ATCC 19977 / DSM 44196 / CCUG 20993 / CIP 104536 / JCM 13569 / NCTC 13031 / TMC 1543 / L948) (Mycobacterium abscessus).